The following is a 106-amino-acid chain: Gas vesicle protein J (106 aa).

It belongs to the gas vesicle GvpA family.

Its subcellular location is the gas vesicle. Its function is as follows. A minor component of the gas vesicle, might be involved in nucleating gas vesicle formation. Gas vesicles are hollow, gas filled proteinaceous nanostructures found in some microorganisms. It is not clear what function gas vesicles perform in soil bacteria. The sequence is that of Gas vesicle protein J from Streptomyces sp. (strain CB03234).